A 1266-amino-acid polypeptide reads, in one-letter code: Kinesin-like protein KIN-12G (1266 aa).

The segment at 1 to 22 (MPSDCGDDDHGGGSAPAGFELQ) is disordered. The Kinesin motor domain occupies 32 to 369 (NVQVVIRVRP…LKFAQRAKYI (338 aa)). Position 113-120 (113-120 (GQTGSGKT)) interacts with ATP. 4 coiled-coil regions span residues 613 to 668 (MEFI…SEAV), 817 to 854 (RSEL…FKRK), 1029 to 1060 (ARES…AERV), and 1084 to 1120 (SELL…MNRH).

The protein belongs to the TRAFAC class myosin-kinesin ATPase superfamily. Kinesin family. KIN-12 subfamily.

In Oryza sativa subsp. japonica (Rice), this protein is Kinesin-like protein KIN-12G.